We begin with the raw amino-acid sequence, 212 residues long: Ribonuclease HII (212 aa).

The region spanning 17–206 (RVIAGVDEAG…KSTKPQSLQT (190 aa)) is the RNase H type-2 domain. Positions 23, 24, and 115 each coordinate a divalent metal cation.

This sequence belongs to the RNase HII family. Mn(2+) serves as cofactor. It depends on Mg(2+) as a cofactor.

The protein localises to the cytoplasm. The enzyme catalyses Endonucleolytic cleavage to 5'-phosphomonoester.. Its function is as follows. Endonuclease that specifically degrades the RNA of RNA-DNA hybrids. In Syntrophus aciditrophicus (strain SB), this protein is Ribonuclease HII.